Reading from the N-terminus, the 496-residue chain is uncharacterized protein (496 aa).

The signal sequence occupies residues 1–19 (MTTGYILIAAILILGGVIA). Residues 45 to 67 (AVLVTILTGGLVSATTLAILFIA) form a helical membrane-spanning segment. The interval 113–137 (LETTRTDKKQVETQRDQAKKEKLKA) is disordered.

Its subcellular location is the membrane. This is an uncharacterized protein from Nostoc sp. (strain PCC 7120 / SAG 25.82 / UTEX 2576).